Reading from the N-terminus, the 347-residue chain is Endophilin-A3 (347 aa).

The membrane-binding amphipathic helix stretch occupies residues 1 to 21 (MSVAGLKKQFHKASQLFSEKI). One can recognise a BAR domain in the interval 18 to 249 (SEKISGAEGT…LELRIALASQ (232 aa)). The segment at 60–87 (PNPAYRAKLGMLNTMSKLRGQVKATGYP) is required for dimerization upon membrane association. Residues 180–201 (EEEIRQAVEKFEESKELAERSM) are a coiled coil. An interaction with ARC region spans residues 218–254 (FVEAALDYHRQSTEILQELQNKLELRIALASQVPRRD). The segment at 255–284 (YMPKPVNTSSTNANGVEPSSSSKLTGTDIP) is disordered. The span at 260-284 (VNTSSTNANGVEPSSSSKLTGTDIP) shows a compositional bias: polar residues. The 60-residue stretch at 285–344 (SDQPCCRGLYDFEPENEGELGFKEGDIITLTNQIDENWYEGMLRGESGFFPINYVEVIVP) folds into the SH3 domain.

Belongs to the endophilin family. Interacts with SGIP1 and DYDC1. Interacts with FASLG. Interacts with ATXN2. Interacts with BIN2. Interacts with ARC, DNM1 and SYNJ1. Expressed at high level in testis and at lower level in brain and liver.

It is found in the cytoplasm. Its subcellular location is the early endosome membrane. Its function is as follows. Implicated in endocytosis. May recruit other proteins to membranes with high curvature. The protein is Endophilin-A3 (Sh3gl3) of Rattus norvegicus (Rat).